The sequence spans 216 residues: DNA replication complex GINS protein PSF3 (216 aa).

The not essential for folding and stability of GINS complex, but may regulate accessibility to the central complex pore stretch occupies residues Met1–Glu16.

It belongs to the GINS3/PSF3 family. Component of the GINS complex which is a heterotetramer of GINS1, GINS2, GINS3 and GINS4. Forms a stable subcomplex with GINS2. GINS complex interacts with DNA primase in vitro. Component of the CMG helicase complex, a hexameric ring of related MCM2-7 subunits stabilized by CDC45 and the tetrameric GINS complex.

The protein localises to the nucleus. Its subcellular location is the chromosome. In terms of biological role, required for correct functioning of the GINS complex, a complex that plays an essential role in the initiation of DNA replication, and progression of DNA replication forks. GINS complex is a core component of CDC45-MCM-GINS (CMG) helicase, the molecular machine that unwinds template DNA during replication, and around which the replisome is built. This Mus musculus (Mouse) protein is DNA replication complex GINS protein PSF3 (Gins3).